Here is a 125-residue protein sequence, read N- to C-terminus: Egg cell-secreted protein 1.3 (125 aa).

Positions 1–24 are cleaved as a signal peptide; that stretch reads MASNTSFLFVTVTLLLVLNVSSRA.

Belongs to the plant egg cell-secreted peptide family. In terms of tissue distribution, restricted to female reproductive tissues, specifically accumulating in storage vesicles of the unfertilized egg cell.

It localises to the cytoplasmic vesicle. The protein localises to the secreted. Its function is as follows. Involved in the regulation of gamete interactions during the double fertilization and to prevent multiple-pollen tube attraction; mediates the redistribution of the gamete fusogen HAP2/GCS1 to the cell surface after secretion upon sperm arrival. The chain is Egg cell-secreted protein 1.3 (EC1.3) from Arabidopsis thaliana (Mouse-ear cress).